We begin with the raw amino-acid sequence, 318 residues long: Small ribosomal subunit biogenesis GTPase RsgA (318 aa).

Residues 1 to 16 are compositionally biased toward basic residues; that stretch reads MTRGKPGRAGHDRRHA. A disordered region spans residues 1-21; it reads MTRGKPGRAGHDRRHASTGEH. In terms of domain architecture, CP-type G spans 84–249; the sequence is SDQFKSKQLA…LIDSPGFQEF (166 aa). Residues 133 to 136 and 187 to 195 contribute to the GTP site; these read NKID and GQSGMGKSS. Zn(2+) contacts are provided by Cys273, Cys278, His280, and Cys286.

Belongs to the TRAFAC class YlqF/YawG GTPase family. RsgA subfamily. Monomer. Associates with 30S ribosomal subunit, binds 16S rRNA. It depends on Zn(2+) as a cofactor.

The protein localises to the cytoplasm. In terms of biological role, one of several proteins that assist in the late maturation steps of the functional core of the 30S ribosomal subunit. Helps release RbfA from mature subunits. May play a role in the assembly of ribosomal proteins into the subunit. Circularly permuted GTPase that catalyzes slow GTP hydrolysis, GTPase activity is stimulated by the 30S ribosomal subunit. The chain is Small ribosomal subunit biogenesis GTPase RsgA from Ralstonia nicotianae (strain ATCC BAA-1114 / GMI1000) (Ralstonia solanacearum).